The sequence spans 61 residues: Large ribosomal subunit protein uL29 (61 aa).

The protein belongs to the universal ribosomal protein uL29 family.

The protein is Large ribosomal subunit protein uL29 of Campylobacter curvus (strain 525.92).